A 96-amino-acid polypeptide reads, in one-letter code: MALEMTQRQGIVVWLYSLRQVKQLRRYGLVYYTSKRMKYVYLYVDADQAPAVIERLKKLHYVKRVTRSQRPMLDMEFGALAELANQETATKAALKE.

Belongs to the UPF0298 family.

Its subcellular location is the cytoplasm. This chain is UPF0298 protein LCA_1075, found in Latilactobacillus sakei subsp. sakei (strain 23K) (Lactobacillus sakei subsp. sakei).